The primary structure comprises 234 residues: HTH-type transcriptional regulator ArcR (234 aa).

Residue 40-129 participates in a nucleoside 3',5'-cyclic phosphate binding; the sequence is VRHYTKGQVI…MAFLCKANDD (90 aa). The HTH crp-type domain maps to 155 to 228; sequence KFAKDRIIKL…HKNWLVSKHL (74 aa). Residues 188 to 207 constitute a DNA-binding region (H-T-H motif); it reads IQLMSDMAGISRETAGHIIH.

Its subcellular location is the cytoplasm. Its function is as follows. Positively regulates the expression of the arcABDCR operon under anaerobic conditions, thus playing an essential role in arginine catabolism. May also control the expression of genes encoding proteins which are involved in anaerobic metabolism. Can bind cyclic AMP. In Staphylococcus aureus (strain USA300 / TCH1516), this protein is HTH-type transcriptional regulator ArcR (arcR).